The following is a 108-amino-acid chain: Small ribosomal subunit protein eS25A (108 aa).

A compositionally biased stretch (low complexity) spans Met-1–Gly-20. Residues Met-1 to Lys-30 form a disordered region. Pro-2 carries the post-translational modification N,N-dimethylproline; by NTM1. Positions Lys-21 to Lys-30 are enriched in basic residues.

The protein belongs to the eukaryotic ribosomal protein eS25 family. In terms of assembly, component of the small ribosomal subunit (SSU). Mature yeast ribosomes consist of a small (40S) and a large (60S) subunit. The 40S small subunit contains 1 molecule of ribosomal RNA (18S rRNA) and 33 different proteins (encoded by 57 genes). The large 60S subunit contains 3 rRNA molecules (25S, 5.8S and 5S rRNA) and 46 different proteins (encoded by 81 genes).

The protein localises to the cytoplasm. Functionally, component of the ribosome, a large ribonucleoprotein complex responsible for the synthesis of proteins in the cell. The small ribosomal subunit (SSU) binds messenger RNAs (mRNAs) and translates the encoded message by selecting cognate aminoacyl-transfer RNA (tRNA) molecules. The large subunit (LSU) contains the ribosomal catalytic site termed the peptidyl transferase center (PTC), which catalyzes the formation of peptide bonds, thereby polymerizing the amino acids delivered by tRNAs into a polypeptide chain. The nascent polypeptides leave the ribosome through a tunnel in the LSU and interact with protein factors that function in enzymatic processing, targeting, and the membrane insertion of nascent chains at the exit of the ribosomal tunnel. The sequence is that of Small ribosomal subunit protein eS25A from Saccharomyces cerevisiae (strain ATCC 204508 / S288c) (Baker's yeast).